The following is a 124-amino-acid chain: Outer dense fiber protein 2 (124 aa).

Positions 13–124 (KEDSERLMEQ…EAIMEQLKEL (112 aa)) form a coiled coil.

This sequence belongs to the ODF2 family. In terms of assembly, self-associates. Associates with microtubules and forms a fibrillar structure partially linked to the microtubule network. Interacts through its C-terminus with PLK1. Interacts with ODF1. Interacts with MARK4; the interaction is required for localization of ODF2 to centrioles. Interacts with TSSK4. Interacts with AKNA. Interacts with QRICH2. Interacts with CFAP58. Interacts with BBOF1. Interacts with CCDC38. Interacts with CCDC42. In terms of processing, tyrosine phosphorylated. As to expression, detected in sperm flagella (at protein level).

It localises to the cytoplasm. The protein localises to the cytoskeleton. The protein resides in the microtubule organizing center. Its subcellular location is the centrosome. It is found in the cell projection. It localises to the cilium. The protein localises to the centriole. The protein resides in the spindle pole. Its subcellular location is the flagellum. Seems to be a major component of sperm tail outer dense fibers (ODF). ODFs are filamentous structures located on the outside of the axoneme in the midpiece and principal piece of the mammalian sperm tail and may help to maintain the passive elastic structures and elastic recoil of the sperm tail. May have a modulating influence on sperm motility. Functions as a general scaffold protein that is specifically localized at the distal/subdistal appendages of mother centrioles. Component of the centrosome matrix required for the localization of PLK1 and NIN to the centrosomes. Required for the formation and/or maintenance of normal CETN1 assembly. This is Outer dense fiber protein 2 from Mesocricetus auratus (Golden hamster).